The sequence spans 158 residues: SsrA-binding protein (158 aa).

The interval 131 to 158 is disordered; the sequence is KQLHDKRQTEKERDWNKQKQRILQTNQR. Residues 132–147 are compositionally biased toward basic and acidic residues; sequence QLHDKRQTEKERDWNK.

The protein belongs to the SmpB family.

It localises to the cytoplasm. In terms of biological role, required for rescue of stalled ribosomes mediated by trans-translation. Binds to transfer-messenger RNA (tmRNA), required for stable association of tmRNA with ribosomes. tmRNA and SmpB together mimic tRNA shape, replacing the anticodon stem-loop with SmpB. tmRNA is encoded by the ssrA gene; the 2 termini fold to resemble tRNA(Ala) and it encodes a 'tag peptide', a short internal open reading frame. During trans-translation Ala-aminoacylated tmRNA acts like a tRNA, entering the A-site of stalled ribosomes, displacing the stalled mRNA. The ribosome then switches to translate the ORF on the tmRNA; the nascent peptide is terminated with the 'tag peptide' encoded by the tmRNA and targeted for degradation. The ribosome is freed to recommence translation, which seems to be the essential function of trans-translation. This is SsrA-binding protein from Teredinibacter turnerae (strain ATCC 39867 / T7901).